The following is a 148-amino-acid chain: SsrA-binding protein (148 aa).

Residues alanine 119 to arginine 148 form a disordered region. Residues lysine 127 to arginine 142 are compositionally biased toward basic and acidic residues.

Belongs to the SmpB family.

The protein localises to the cytoplasm. In terms of biological role, required for rescue of stalled ribosomes mediated by trans-translation. Binds to transfer-messenger RNA (tmRNA), required for stable association of tmRNA with ribosomes. tmRNA and SmpB together mimic tRNA shape, replacing the anticodon stem-loop with SmpB. tmRNA is encoded by the ssrA gene; the 2 termini fold to resemble tRNA(Ala) and it encodes a 'tag peptide', a short internal open reading frame. During trans-translation Ala-aminoacylated tmRNA acts like a tRNA, entering the A-site of stalled ribosomes, displacing the stalled mRNA. The ribosome then switches to translate the ORF on the tmRNA; the nascent peptide is terminated with the 'tag peptide' encoded by the tmRNA and targeted for degradation. The ribosome is freed to recommence translation, which seems to be the essential function of trans-translation. The sequence is that of SsrA-binding protein from Neisseria meningitidis serogroup C (strain 053442).